The sequence spans 779 residues: Abnormal cell migration protein 10 (779 aa).

Positions 78-97 (NELEADTEEDIAETADDEES) are enriched in acidic residues. Disordered stretches follow at residues 78-105 (NELEADTEEDIAETADDEESKDPVEKTE), 189-217 (SSSRENVKSISTLPPPPPALSYHQTPQQP), and 242-302 (AASS…NAEE). The segment covering 189 to 200 (SSSRENVKSIST) has biased composition (polar residues). Low complexity predominate over residues 242 to 254 (AASSCSSPDGDSA). A compositionally biased stretch (polar residues) spans 256–293 (GDSSSTESSNNRCRNSAFSSNDSCRDSLNTPSPTQVSP). The region spanning 317–407 (EAKVTKIFVK…NKLYFMRRPD (91 aa)) is the Ras-associating domain. A PH domain is found at 456–566 (PPEMEGFLYL…WLVALRIAKN (111 aa)). Composition is skewed to polar residues over residues 645-660 (SFSVNSCQQSHPSRTS) and 688-698 (RASTSSPTIPQ). Residues 645–763 (SFSVNSCQQS…SPMAPAKNDL (119 aa)) are disordered. Over residues 708 to 729 (PAPPPVASVMRMPPPVTPPKPC) the composition is skewed to pro residues.

This sequence belongs to the MRL family. In terms of assembly, may interact (via Ras-associating and PH domains) with ced-10 (GTP-bound form).

It localises to the perikaryon. Functionally, required cell non-autonomously for proper development of the excretory canals and for the long-range anterior-posterior migrations of embryonic neurons CAN, ALM and HSN. Plays a role, probably downstream of ced-10/rac1, in orientating axonal growth of HSN and AVM neurons in response to guidance cues such as slt-1. May regulate growth cone polarization by promoting asymmetric F-actin assembly. May be involved in signal transduction during cell migration. The protein is Abnormal cell migration protein 10 of Caenorhabditis elegans.